A 193-amino-acid chain; its full sequence is UPF0301 protein Bfl251 (193 aa).

It belongs to the UPF0301 (AlgH) family.

The polypeptide is UPF0301 protein Bfl251 (Blochmanniella floridana).